The following is a 157-amino-acid chain: Ubiquitin-like protein 4A (157 aa).

The 76-residue stretch at 1-76 folds into the Ubiquitin-like domain; sequence MQLTVKALQG…LNLVVKPLEK (76 aa). Residue Lys-48 forms a Glycyl lysine isopeptide (Lys-Gly) (interchain with G-Cter in ubiquitin) linkage. Residue Ser-90 is modified to Phosphoserine. The tract at residues 96 to 138 is required and sufficient for interaction with BAG6; that stretch reads WQLISKVLARHFSIGDASRVLEQLQRDYDRSLSRLTLDDIERL.

As to quaternary structure, component of the BAG6/BAT3 complex, at least composed of BAG6, UBL4A and GET4/TRC35. Interacts with BAG6; the interaction is direct and required for UBL4A protein stability. Interacts with USP13; may be indirect via BAG6. Polyubiquitinated. Ubiquitination by AMFR and deubiquitination by USP13 may regulate the interaction between the BAG6/BAT complex and SGTA and therefore may regulate client proteins fate.

Its subcellular location is the cytoplasm. The protein localises to the cytosol. It is found in the nucleus. In terms of biological role, as part of a cytosolic protein quality control complex, the BAG6/BAT3 complex, maintains misfolded and hydrophobic patches-containing proteins in a soluble state and participates in their proper delivery to the endoplasmic reticulum or alternatively can promote their sorting to the proteasome where they undergo degradation. The BAG6/BAT3 complex is involved in the post-translational delivery of tail-anchored/type II transmembrane proteins to the endoplasmic reticulum membrane. Recruited to ribosomes, it interacts with the transmembrane region of newly synthesized tail-anchored proteins and together with SGTA and ASNA1 mediates their delivery to the endoplasmic reticulum. Client proteins that cannot be properly delivered to the endoplasmic reticulum are ubiquitinated and sorted to the proteasome. Similarly, the BAG6/BAT3 complex also functions as a sorting platform for proteins of the secretory pathway that are mislocalized to the cytosol either delivering them to the proteasome for degradation or to the endoplasmic reticulum. The BAG6/BAT3 complex also plays a role in the endoplasmic reticulum-associated degradation (ERAD), a quality control mechanism that eliminates unwanted proteins of the endoplasmic reticulum through their retrotranslocation to the cytosol and their targeting to the proteasome. It maintains these retrotranslocated proteins in an unfolded yet soluble state condition in the cytosol to ensure their proper delivery to the proteasome. This Rattus norvegicus (Rat) protein is Ubiquitin-like protein 4A (Ubl4a).